A 197-amino-acid polypeptide reads, in one-letter code: ATP-dependent Clp protease proteolytic subunit (197 aa).

The active-site Nucleophile is the serine 98. Histidine 123 is a catalytic residue.

Belongs to the peptidase S14 family. As to quaternary structure, fourteen ClpP subunits assemble into 2 heptameric rings which stack back to back to give a disk-like structure with a central cavity, resembling the structure of eukaryotic proteasomes.

The protein localises to the cytoplasm. It carries out the reaction Hydrolysis of proteins to small peptides in the presence of ATP and magnesium. alpha-casein is the usual test substrate. In the absence of ATP, only oligopeptides shorter than five residues are hydrolyzed (such as succinyl-Leu-Tyr-|-NHMec, and Leu-Tyr-Leu-|-Tyr-Trp, in which cleavage of the -Tyr-|-Leu- and -Tyr-|-Trp bonds also occurs).. Cleaves peptides in various proteins in a process that requires ATP hydrolysis. Has a chymotrypsin-like activity. Plays a major role in the degradation of misfolded proteins. This chain is ATP-dependent Clp protease proteolytic subunit, found in Haemophilus ducreyi (strain 35000HP / ATCC 700724).